Consider the following 333-residue polypeptide: Probable endo-beta-1,4-glucanase B (333 aa).

Residues 1–17 (MKFRNLFFAAVAGSAVA) form the signal peptide. N-linked (GlcNAc...) asparagine glycans are attached at residues N37 and N100. Catalysis depends on E160, which acts as the Proton donor. The Nucleophile role is filled by E267.

The protein belongs to the glycosyl hydrolase 5 (cellulase A) family.

It localises to the secreted. It catalyses the reaction Endohydrolysis of (1-&gt;4)-beta-D-glucosidic linkages in cellulose, lichenin and cereal beta-D-glucans.. Functionally, has endoglucanase activity on substrates containing beta-1,4 glycosidic bonds, like in carboxymethylcellulose (CMC), hydroxyethylcellulose (HEC) and beta-glucan. Involved in the degradation of complex natural cellulosic substrates. The sequence is that of Probable endo-beta-1,4-glucanase B (eglB) from Aspergillus oryzae (strain ATCC 42149 / RIB 40) (Yellow koji mold).